The chain runs to 335 residues: Pyridoxal 5'-phosphate synthase subunit PdxS (335 aa).

Asp30 lines the D-ribose 5-phosphate pocket. The Schiff-base intermediate with D-ribose 5-phosphate role is filled by Lys87. Gly159 is a binding site for D-ribose 5-phosphate. Arg171 is a binding site for D-glyceraldehyde 3-phosphate. D-ribose 5-phosphate is bound by residues Gly257 and 278–279; that span reads GS.

Belongs to the PdxS/SNZ family. In terms of assembly, in the presence of PdxT, forms a dodecamer of heterodimers.

The enzyme catalyses aldehydo-D-ribose 5-phosphate + D-glyceraldehyde 3-phosphate + L-glutamine = pyridoxal 5'-phosphate + L-glutamate + phosphate + 3 H2O + H(+). Its pathway is cofactor biosynthesis; pyridoxal 5'-phosphate biosynthesis. Catalyzes the formation of pyridoxal 5'-phosphate from ribose 5-phosphate (RBP), glyceraldehyde 3-phosphate (G3P) and ammonia. The ammonia is provided by the PdxT subunit. Can also use ribulose 5-phosphate and dihydroxyacetone phosphate as substrates, resulting from enzyme-catalyzed isomerization of RBP and G3P, respectively. This chain is Pyridoxal 5'-phosphate synthase subunit PdxS, found in Thermococcus onnurineus (strain NA1).